The primary structure comprises 79 residues: UPF0175 protein APE_0890a.1 (79 aa).

Belongs to the UPF0175 family.

The polypeptide is UPF0175 protein APE_0890a.1 (Aeropyrum pernix (strain ATCC 700893 / DSM 11879 / JCM 9820 / NBRC 100138 / K1)).